Consider the following 231-residue polypeptide: Triggering receptor expressed on myeloid cells 1 (231 aa).

The signal sequence occupies residues 1-20 (MRKTRLWGLLWMFFVSELLA). The Extracellular segment spans residues 21-202 (ATKLTEEKYE…TDIIRVPVFN (182 aa)). An Ig-like V-type domain is found at 26 to 131 (EEKYELKEGQ…LFDRIRLVVT (106 aa)). Cys41 and Cys110 are disulfide-bonded. Polar residues-rich tracts occupy residues 134–157 (SSGT…TTTK) and 164–182 (TSPT…DVST). Residues 134 to 182 (SSGTPGSSENSTPNVYKTPPTTTKALRPLYTSPTTVTQAPPKSTADVST) are disordered. Asn188 and Asn191 each carry an N-linked (GlcNAc...) asparagine glycan. Residues 203 to 223 (IAILVAGGFLSKSLVFSVLFA) traverse the membrane as a helical segment. At 224–231 (VTLRSFVP) the chain is on the cytoplasmic side.

In terms of assembly, monomer. Homomultimer; when activated. Interacts with TYROBP/DAP12. Interacts with TLR4.

It localises to the cell membrane. Functionally, cell surface receptor that plays important roles in innate and adaptive immunity by amplifying inflammatory responses. Upon activation by various ligands such as PGLYRP1, HMGB1 or HSP70, multimerizes and forms a complex with transmembrane adapter TYROBP/DAP12. In turn, initiates a SYK-mediated cascade of tyrosine phosphorylation, activating multiple downstream mediators such as BTK, MAPK1, MAPK3 or phospholipase C-gamma. This cascade promotes the neutrophil- and macrophage-mediated release of pro-inflammatory cytokines and/or chemokines, as well as their migration and thereby amplifies inflammatory responses that are triggered by bacterial and fungal infections. By also promoting the amplification of inflammatory signals that are initially triggered by Toll-like receptor (TLR) and NOD-like receptor engagement, plays a major role in the pathophysiology of acute and chronic inflammatory diseases of different etiologies including septic shock and atherosclerosis. The polypeptide is Triggering receptor expressed on myeloid cells 1 (TREM1) (Pongo abelii (Sumatran orangutan)).